We begin with the raw amino-acid sequence, 383 residues long: MSETELRKRQAQFTRELHGDDIGKKTGLSALMSKNNSAQKEAVQKYLRNWDGRTDKDAEERRLEDYNEATHSYYNVVTDFYEYGWGSSFHFSRFYKGESFAASIARHEHYLAYKAGIQRGDLVLDVGCGVGGPAREIARFTGCNVIGLNNNDYQIAKAKYYAKKYNLSDQMDFVKGDFMKMDFEENTFDKVYAIEATCHAPKLEGVYSEIYKVLKPGGTFAVYEWVMTDKYDENNPEHRKIAYEIELGDGIPKMFHVDVARKALKNCGFEVLVSEDLADNDDEIPWYYPLTGEWKYVQNLANLATFFRTSYLGRQFTTAMVTVMEKLGLAPEGSKEVTAALENAAVGLVAGGKSKLFTPMMLFVARKPENAETPSQTSQEATQ.

N-acetylserine is present on S2. A Phosphoserine modification is found at S99.

The protein belongs to the class I-like SAM-binding methyltransferase superfamily. Erg6/SMT family. As to quaternary structure, interacts with ERG28.

The protein resides in the microsome. It localises to the mitochondrion. The enzyme catalyses zymosterol + S-adenosyl-L-methionine = fecosterol + S-adenosyl-L-homocysteine + H(+). It functions in the pathway steroid metabolism; ergosterol biosynthesis; ergosterol from zymosterol: step 1/5. Its function is as follows. Sterol 24-C-methyltransferase; part of the third module of ergosterol biosynthesis pathway that includes the late steps of the pathway. ERG6 catalyzes the methyl transfer from S-adenosyl-methionine to the C-24 of zymosterol to form fecosterol. The third module or late pathway involves the ergosterol synthesis itself through consecutive reactions that mainly occur in the endoplasmic reticulum (ER) membrane. Firstly, the squalene synthase ERG9 catalyzes the condensation of 2 farnesyl pyrophosphate moieties to form squalene, which is the precursor of all steroids. Squalene synthase is crucial for balancing the incorporation of farnesyl diphosphate (FPP) into sterol and nonsterol isoprene synthesis. Secondly, the squalene epoxidase ERG1 catalyzes the stereospecific oxidation of squalene to (S)-2,3-epoxysqualene, which is considered to be a rate-limiting enzyme in steroid biosynthesis. Then, the lanosterol synthase ERG7 catalyzes the cyclization of (S)-2,3 oxidosqualene to lanosterol, a reaction that forms the sterol core. In the next steps, lanosterol is transformed to zymosterol through a complex process involving various demethylation, reduction and desaturation reactions. The lanosterol 14-alpha-demethylase ERG11 (also known as CYP51) catalyzes C14-demethylation of lanosterol to produce 4,4'-dimethyl cholesta-8,14,24-triene-3-beta-ol, which is critical for ergosterol biosynthesis. The C-14 reductase ERG24 reduces the C14=C15 double bond of 4,4-dimethyl-cholesta-8,14,24-trienol to produce 4,4-dimethyl-cholesta-8,24-dienol. 4,4-dimethyl-cholesta-8,24-dienol is substrate of the C-4 demethylation complex ERG25-ERG26-ERG27 in which ERG25 catalyzes the three-step monooxygenation required for the demethylation of 4,4-dimethyl and 4alpha-methylsterols, ERG26 catalyzes the oxidative decarboxylation that results in a reduction of the 3-beta-hydroxy group at the C-3 carbon to an oxo group, and ERG27 is responsible for the reduction of the keto group on the C-3. ERG28 has a role as a scaffold to help anchor ERG25, ERG26 and ERG27 to the endoplasmic reticulum and ERG29 regulates the activity of the iron-containing C4-methylsterol oxidase ERG25. Then, the sterol 24-C-methyltransferase ERG6 catalyzes the methyl transfer from S-adenosyl-methionine to the C-24 of zymosterol to form fecosterol. The C-8 sterol isomerase ERG2 catalyzes the reaction which results in unsaturation at C-7 in the B ring of sterols and thus converts fecosterol to episterol. The sterol-C5-desaturase ERG3 then catalyzes the introduction of a C-5 double bond in the B ring to produce 5-dehydroepisterol. The C-22 sterol desaturase ERG5 further converts 5-dehydroepisterol into ergosta-5,7,22,24(28)-tetraen-3beta-ol by forming the C-22(23) double bond in the sterol side chain. Finally, ergosta-5,7,22,24(28)-tetraen-3beta-ol is substrate of the C-24(28) sterol reductase ERG4 to produce ergosterol. This chain is Sterol 24-C-methyltransferase ERG6, found in Saccharomyces cerevisiae (strain ATCC 204508 / S288c) (Baker's yeast).